The following is a 768-amino-acid chain: Ribosomal RNA large subunit methyltransferase K/L (768 aa).

Residues 60–175 (DLYKICLWSR…DKQAELYLDL (116 aa)) form the THUMP domain.

It belongs to the methyltransferase superfamily. RlmKL family.

It localises to the cytoplasm. It catalyses the reaction guanosine(2445) in 23S rRNA + S-adenosyl-L-methionine = N(2)-methylguanosine(2445) in 23S rRNA + S-adenosyl-L-homocysteine + H(+). The enzyme catalyses guanosine(2069) in 23S rRNA + S-adenosyl-L-methionine = N(2)-methylguanosine(2069) in 23S rRNA + S-adenosyl-L-homocysteine + H(+). Functionally, specifically methylates the guanine in position 2445 (m2G2445) and the guanine in position 2069 (m7G2069) of 23S rRNA. This is Ribosomal RNA large subunit methyltransferase K/L from Psychrobacter arcticus (strain DSM 17307 / VKM B-2377 / 273-4).